We begin with the raw amino-acid sequence, 538 residues long: Inositol-3-phosphate synthase (538 aa).

NAD(+)-binding residues include Gly-74, Gly-75, Asn-76, Asn-77, Asp-150, Ser-186, Val-187, Gln-197, Asp-198, Arg-200, Thr-247, Ala-248, Asn-249, Thr-250, Gly-298, Ser-299, Asp-323, Ser-326, Asn-357, Asn-358, Asp-359, Lys-372, Gly-412, Asp-413, Asp-441, and Ser-442.

It belongs to the myo-inositol 1-phosphate synthase family. Homotetramer. NAD(+) serves as cofactor.

It localises to the cytoplasm. It catalyses the reaction D-glucose 6-phosphate = 1D-myo-inositol 3-phosphate. The protein operates within polyol metabolism; myo-inositol biosynthesis; myo-inositol from D-glucose 6-phosphate: step 1/2. In terms of biological role, key enzyme in myo-inositol biosynthesis pathway that catalyzes the conversion of glucose 6-phosphate to 1-myo-inositol 1-phosphate in a NAD-dependent manner. Rate-limiting enzyme in the synthesis of all inositol-containing compounds. The polypeptide is Inositol-3-phosphate synthase (INO1) (Candida glabrata (strain ATCC 2001 / BCRC 20586 / JCM 3761 / NBRC 0622 / NRRL Y-65 / CBS 138) (Yeast)).